The sequence spans 627 residues: Pescadillo homolog (627 aa).

In terms of domain architecture, BRCT spans 321 to 414 (RLRTLFKGLK…QLLPTNKYFI (94 aa)). Disordered stretches follow at residues 436–471 (PEEK…AVDQ), 489–562 (YKKY…LQAR), and 596–627 (FEAG…KLGK). Ser453 and Ser457 each carry phosphoserine. Composition is skewed to acidic residues over residues 453 to 471 (SDDD…AVDQ) and 498 to 521 (VNED…EELD). Basic and acidic residues predominate over residues 522 to 533 (EQAKRLKEEKQK). Positions 540-549 (KVHKVNKRQL) are enriched in basic residues. Composition is skewed to basic and acidic residues over residues 550–559 (HKAEVDEHRL) and 596–605 (FEAGEKEARK). Low complexity predominate over residues 616 to 627 (AAAAAKASKLGK).

Belongs to the pescadillo family.

It is found in the nucleus. It localises to the nucleolus. The protein resides in the nucleoplasm. Required for maturation of ribosomal RNAs and formation of the large ribosomal subunit. This Drosophila ananassae (Fruit fly) protein is Pescadillo homolog.